The sequence spans 492 residues: WD repeat-containing protein JIP5 (492 aa).

WD repeat units follow at residues 127–166 (RHKG…VVKK), 178–217 (KKND…LSNS), 236–274 (RSAY…ILIS), 276–317 (DQED…LEDQ), and 365–405 (RNHN…VEEN). Composition is skewed to acidic residues over residues 404–414 (ENASVESDSDE) and 422–433 (DLSDDTSSDDET). A disordered region spans residues 404–472 (ENASVESDSD…SKSVKKRKIM (69 aa)). Basic and acidic residues predominate over residues 449 to 462 (KDLKEDHQEEKESN).

Belongs to the WD repeat WDR55 family. Interacts with BRE1, BUD27 and GIS1.

The protein resides in the nucleus. The protein localises to the nucleolus. This chain is WD repeat-containing protein JIP5 (JIP5), found in Saccharomyces cerevisiae (strain YJM789) (Baker's yeast).